The sequence spans 465 residues: ATP synthase subunit beta (465 aa).

149–156 (GGAGVGKT) is a binding site for ATP.

The protein belongs to the ATPase alpha/beta chains family. F-type ATPases have 2 components, CF(1) - the catalytic core - and CF(0) - the membrane proton channel. CF(1) has five subunits: alpha(3), beta(3), gamma(1), delta(1), epsilon(1). CF(0) has three main subunits: a(1), b(2) and c(9-12). The alpha and beta chains form an alternating ring which encloses part of the gamma chain. CF(1) is attached to CF(0) by a central stalk formed by the gamma and epsilon chains, while a peripheral stalk is formed by the delta and b chains.

It is found in the cell inner membrane. The catalysed reaction is ATP + H2O + 4 H(+)(in) = ADP + phosphate + 5 H(+)(out). Functionally, produces ATP from ADP in the presence of a proton gradient across the membrane. The catalytic sites are hosted primarily by the beta subunits. This is ATP synthase subunit beta from Dictyoglomus thermophilum (strain ATCC 35947 / DSM 3960 / H-6-12).